Here is a 465-residue protein sequence, read N- to C-terminus: NADH-quinone oxidoreductase subunit N (465 aa).

Helical transmembrane passes span 9-29 (FNFV…VLLL), 44-64 (ASII…GFVL), 73-93 (LFVS…FSML), 110-130 (FLFM…IVIF), 159-179 (YFTL…FVYL), 198-218 (PILL…LSIA), 235-255 (FIAF…LRIF), 265-285 (EYIV…VALI), 292-312 (MLAY…VSSM), 327-347 (IFAL…IFLI), 371-391 (IMLA…IFWG), 405-427 (YALV…KILI), and 444-464 (VKQK…VFLL).

This sequence belongs to the complex I subunit 2 family. As to quaternary structure, NDH-1 is composed of 14 different subunits. Subunits NuoA, H, J, K, L, M, N constitute the membrane sector of the complex.

The protein resides in the cell inner membrane. It catalyses the reaction a quinone + NADH + 5 H(+)(in) = a quinol + NAD(+) + 4 H(+)(out). NDH-1 shuttles electrons from NADH, via FMN and iron-sulfur (Fe-S) centers, to quinones in the respiratory chain. The immediate electron acceptor for the enzyme in this species is believed to be ubiquinone. Couples the redox reaction to proton translocation (for every two electrons transferred, four hydrogen ions are translocated across the cytoplasmic membrane), and thus conserves the redox energy in a proton gradient. The chain is NADH-quinone oxidoreductase subunit N from Campylobacter lari (strain RM2100 / D67 / ATCC BAA-1060).